Here is a 94-residue protein sequence, read N- to C-terminus: Cell division topological specificity factor (94 aa).

This sequence belongs to the MinE family.

In terms of biological role, prevents the cell division inhibition by proteins MinC and MinD at internal division sites while permitting inhibition at polar sites. This ensures cell division at the proper site by restricting the formation of a division septum at the midpoint of the long axis of the cell. The sequence is that of Cell division topological specificity factor from Alkaliphilus metalliredigens (strain QYMF).